The primary structure comprises 580 residues: Isochorismate synthase, chloroplastic (580 aa).

Residues 1–91 constitute a chloroplast transit peptide; it reads MASITGHCVA…LAMERLSSAV (91 aa).

The protein belongs to the isochorismate synthase family. The cofactor is Mg(2+).

It is found in the plastid. It localises to the chloroplast. The catalysed reaction is chorismate = isochorismate. Not inhibited by Tyr, Phe or Trp. In terms of biological role, involved in the synthesis of o-succinylbenzoic acid, 2,3-dihydroxybenzoic acid and salicylic acid (SA). The polypeptide is Isochorismate synthase, chloroplastic (Catharanthus roseus (Madagascar periwinkle)).